We begin with the raw amino-acid sequence, 462 residues long: Flavin-containing monooxygenase FMO GS-OX3 (462 aa).

Residue 17–22 coordinates FAD; the sequence is GAGPAG. NADP(+) is bound at residue 212 to 217; that stretch reads GNFASG. The helical transmembrane segment at 318–338 threads the bilayer; sequence ALAPGLAFVGLPAMGIVFVMF.

It belongs to the FMO family.

The protein localises to the membrane. It carries out the reaction a (Z)-omega-(methylsulfanyl)-N-sulfo-alkylhydroximate S-glucoside + NADPH + O2 + H(+) = a (Z)-omega-(methylsulfinyl)-alkyl-glucosinolate + NADP(+) + H2O. Functionally, catalyzes the conversion of methylthioalkyl glucosinolates of any chain length into methylsulfinylalkyl glucosinolates. Prefers probably short-chain methylthioalkyl glucosinolates in cv. Landsberg erecta. This chain is Flavin-containing monooxygenase FMO GS-OX3 (FMOGS-OX3), found in Arabidopsis thaliana (Mouse-ear cress).